Consider the following 274-residue polypeptide: DNA repair protein Rad1 (274 aa).

This sequence belongs to the rad1 family. Component of the 9-1-1 checkpoint clamp complex consisting of Rad9 isoform A, Rad1 and Hus1-like; the interaction with Hus1-like is direct. Does not interact directly with Rad9; this interaction is probably mediated by Hus1-like. This complex probably also forms with Rad9 isoform B, however 9-1-1 complex containing Rad9 isoform A localizes to the nuclear periphery. Expressed in ovary.

It is found in the cytoplasm. It localises to the nucleus. Its subcellular location is the nucleus envelope. The chain is DNA repair protein Rad1 from Drosophila melanogaster (Fruit fly).